A 76-amino-acid polypeptide reads, in one-letter code: Putative membrane protein insertion efficiency factor (76 aa).

This sequence belongs to the UPF0161 family.

The protein resides in the cell inner membrane. Its function is as follows. Could be involved in insertion of integral membrane proteins into the membrane. The chain is Putative membrane protein insertion efficiency factor from Paraburkholderia phytofirmans (strain DSM 17436 / LMG 22146 / PsJN) (Burkholderia phytofirmans).